Reading from the N-terminus, the 1099-residue chain is Carbamoyl phosphate synthase large chain (1099 aa).

Residues 1–402 (MPRREDIKRI…ALGKALRSLE (402 aa)) form a carboxyphosphate synthetic domain region. Residues Arg129, Arg169, Gly175, Gly176, Glu208, Val210, Glu215, Gly241, Ile242, His243, Gln285, and Glu299 each contribute to the ATP site. In terms of domain architecture, ATP-grasp 1 spans 133–328 (KKTMEEAGLE…IAKIAALLAV (196 aa)). Mg(2+)-binding residues include Gln285, Glu299, and Asn301. Positions 285, 299, and 301 each coordinate Mn(2+). An oligomerization domain region spans residues 403-541 (LDAAPKLDLD…STYNGVENEA (139 aa)). The segment at 542 to 944 (IPTDKEKIMI…AFAKAEIAAG (403 aa)) is carbamoyl phosphate synthetic domain. An ATP-grasp 2 domain is found at 666 to 857 (AKLLKRIGLR…VAKIAAKIMV (192 aa)). Residues Arg702, Lys741, Leu743, Glu748, Gly773, Val774, His775, Ser776, Gln816, and Glu828 each contribute to the ATP site. 3 residues coordinate Mg(2+): Gln816, Glu828, and Asn830. 3 residues coordinate Mn(2+): Gln816, Glu828, and Asn830. Residues 945–1099 (NPLPTEGAIL…VRKLTDTWKM (155 aa)) enclose the MGS-like domain. The allosteric domain stretch occupies residues 945-1099 (NPLPTEGAIL…VRKLTDTWKM (155 aa)).

This sequence belongs to the CarB family. Composed of two chains; the small (or glutamine) chain promotes the hydrolysis of glutamine to ammonia, which is used by the large (or ammonia) chain to synthesize carbamoyl phosphate. Tetramer of heterodimers (alpha,beta)4. Requires Mg(2+) as cofactor. The cofactor is Mn(2+).

It catalyses the reaction hydrogencarbonate + L-glutamine + 2 ATP + H2O = carbamoyl phosphate + L-glutamate + 2 ADP + phosphate + 2 H(+). The catalysed reaction is hydrogencarbonate + NH4(+) + 2 ATP = carbamoyl phosphate + 2 ADP + phosphate + 2 H(+). It functions in the pathway amino-acid biosynthesis; L-arginine biosynthesis; carbamoyl phosphate from bicarbonate: step 1/1. It participates in pyrimidine metabolism; UMP biosynthesis via de novo pathway; (S)-dihydroorotate from bicarbonate: step 1/3. Functionally, large subunit of the glutamine-dependent carbamoyl phosphate synthetase (CPSase). CPSase catalyzes the formation of carbamoyl phosphate from the ammonia moiety of glutamine, carbonate, and phosphate donated by ATP, constituting the first step of 2 biosynthetic pathways, one leading to arginine and/or urea and the other to pyrimidine nucleotides. The large subunit (synthetase) binds the substrates ammonia (free or transferred from glutamine from the small subunit), hydrogencarbonate and ATP and carries out an ATP-coupled ligase reaction, activating hydrogencarbonate by forming carboxy phosphate which reacts with ammonia to form carbamoyl phosphate. The chain is Carbamoyl phosphate synthase large chain from Thermotoga neapolitana (strain ATCC 49049 / DSM 4359 / NBRC 107923 / NS-E).